Here is a 272-residue protein sequence, read N- to C-terminus: Putative phosphoenolpyruvate synthase regulatory protein (272 aa).

152–159 serves as a coordination point for ADP; that stretch reads GVSRSGKT.

The protein belongs to the pyruvate, phosphate/water dikinase regulatory protein family. PSRP subfamily.

The enzyme catalyses [pyruvate, water dikinase] + ADP = [pyruvate, water dikinase]-phosphate + AMP + H(+). It carries out the reaction [pyruvate, water dikinase]-phosphate + phosphate + H(+) = [pyruvate, water dikinase] + diphosphate. Functionally, bifunctional serine/threonine kinase and phosphorylase involved in the regulation of the phosphoenolpyruvate synthase (PEPS) by catalyzing its phosphorylation/dephosphorylation. The chain is Putative phosphoenolpyruvate synthase regulatory protein from Hahella chejuensis (strain KCTC 2396).